A 205-amino-acid polypeptide reads, in one-letter code: Polyamine-modulated factor 1 (205 aa).

Positions 1 to 28 (MAEASSVNVGSGCAEKGPEELSQEPARP) are disordered. The stretch at 140 to 190 (YLLQQRDALQRRVQRQEAENRQLADAVLAGRRQLEELQLQAQARQQAWQAL) forms a coiled coil.

As to quaternary structure, component of the MIS12 complex composed of MIS12, DSN1, NSL1 and PMF1. Interacts with COPS7A. Interacts via its coiled-coil domain with the leucine-zipper domain of NFE2L2. The interaction with NFE2L2 is required for the transcriptional regulation of SSAT.

The protein resides in the nucleus. Its subcellular location is the chromosome. The protein localises to the centromere. It is found in the kinetochore. In terms of biological role, part of the MIS12 complex which is required for normal chromosome alignment and segregation and kinetochore formation during mitosis. May act as a cotranscription partner of NFE2L2 involved in regulation of polyamine-induced transcription of SSAT. This is Polyamine-modulated factor 1 (PMF1) from Bos taurus (Bovine).